The sequence spans 623 residues: MAFEALTGINGDLITRSWSASKQAYLTERYHKEEAGAVVIFAFQPSFSEKDFFDPDNKSSFGEIKLNRVQFPCMRKIGKGDVATVNEAFLKNLEAVIDPRTSFQASVEMAVRSRKQIVFTGHSSGGATAILATVWYLEKYFIRNPNVYLEPRCVTFGAPLVGDSIFSHALGREKWSRFFVNFVTRFDIVPRITLARKASVEETLPHVLAQLDPRNSSVQESEQRITEFYTSVMRDTSTVANQAVCELTGSAEAILETLSSFLELSPYRPAGTFVFSTEKRLVAVNNSDAILQMLFYTCQASDEQEWSLIPFRSIRDHHSYEELVQSMGMKLFNHLDGENSIESSLNDLGVSTRGRQYVQAALEEEKKRVENQKKIIQVIQQERFLKKLAWIEDEYKPKCQAHKNGYYDSFKVSNEENDFKANVKRAELAGVFDEVLGLLKKCQLPDEFEGDIDWIKLATRYRRLVEPLDIANYHRHLKNEDTGPYMKRGRPTRYIYAQRGYEHHILKPNGMIAEDVFWNKVNGLNLGLQLEEIQETLKNSGSECGSCFWAEVEELKGKPYEEVEVRVKTLEGMLREWITAGEVDEKEIFLEGSTFRKWWITLPKNHKSHSPLRDYMMDEITDT.

An N-acetylalanine modification is found at A2. The Nucleophile role is filled by S123. Catalysis depends on charge relay system residues D187 and H317.

In terms of assembly, homodimer. Interacts with RPS4, RPS6, SNC1, SRFR1, AvrRps4 and HopA1. Interacts with PAD4 (via N-terminus). Interacts with SAG101. EDS1-SAG101 and EDS1-PAD4 form separate complexes in pathogen-unchallenged cells.

The protein resides in the nucleus. It is found in the cytoplasm. It localises to the microsome. Its function is as follows. Positive regulator of basal resistance and of effector-triggered immunity specifically mediated by TIR-NB-LRR resistance proteins. Disruption by bacterial effector of EDS1-TIR-NB-LRR resistance protein interactions constitutes the first step in resistance activation. Triggers early plant defenses and hypersensitive response independently of PAD4, and then recruits PAD4 to potentiate plant defenses through the accumulation of salicylic acid. Nuclear localization is essential for basal and TIR-NB-LRR-conditioned immunity and for reprogramming defense gene expression, while cytoplasmic EDS1 is required to induce a complete immune response. Heterodimerization with PAD4 or SGA101 is necessary for TNL-mediated effector-triggered immunity. Contributes to nonhost resistance against E.amylovora. Has no direct lipase activity. In Arabidopsis thaliana (Mouse-ear cress), this protein is Protein EDS1L.